Here is a 195-residue protein sequence, read N- to C-terminus: ATP-dependent Clp protease proteolytic subunit (195 aa).

Ser99 functions as the Nucleophile in the catalytic mechanism. His124 is an active-site residue.

The protein belongs to the peptidase S14 family. In terms of assembly, fourteen ClpP subunits assemble into 2 heptameric rings which stack back to back to give a disk-like structure with a central cavity, resembling the structure of eukaryotic proteasomes.

It localises to the cytoplasm. It carries out the reaction Hydrolysis of proteins to small peptides in the presence of ATP and magnesium. alpha-casein is the usual test substrate. In the absence of ATP, only oligopeptides shorter than five residues are hydrolyzed (such as succinyl-Leu-Tyr-|-NHMec, and Leu-Tyr-Leu-|-Tyr-Trp, in which cleavage of the -Tyr-|-Leu- and -Tyr-|-Trp bonds also occurs).. Its function is as follows. Cleaves peptides in various proteins in a process that requires ATP hydrolysis. Has a chymotrypsin-like activity. Plays a major role in the degradation of misfolded proteins. The chain is ATP-dependent Clp protease proteolytic subunit from Desulforamulus reducens (strain ATCC BAA-1160 / DSM 100696 / MI-1) (Desulfotomaculum reducens).